The sequence spans 546 residues: Chaperonin GroEL (546 aa).

ATP is bound by residues 30-33 (TLGP), K51, 87-91 (DGTTT), G415, and D495.

Belongs to the chaperonin (HSP60) family. As to quaternary structure, forms a cylinder of 14 subunits composed of two heptameric rings stacked back-to-back. Interacts with the co-chaperonin GroES.

The protein localises to the cytoplasm. It carries out the reaction ATP + H2O + a folded polypeptide = ADP + phosphate + an unfolded polypeptide.. Functionally, together with its co-chaperonin GroES, plays an essential role in assisting protein folding. The GroEL-GroES system forms a nano-cage that allows encapsulation of the non-native substrate proteins and provides a physical environment optimized to promote and accelerate protein folding. This is Chaperonin GroEL from Brucella suis (strain ATCC 23445 / NCTC 10510).